We begin with the raw amino-acid sequence, 111 residues long: Cytochrome c (111 aa).

Position 1 is an N-acetylalanine (A1). Heme c contacts are provided by C22, C25, and H26. K80 carries the N6,N6,N6-trimethyllysine modification. M88 contacts heme c. At K94 the chain carries N6,N6,N6-trimethyllysine.

It belongs to the cytochrome c family. Binds 1 heme c group covalently per subunit.

It is found in the mitochondrion intermembrane space. Functionally, electron carrier protein. The oxidized form of the cytochrome c heme group can accept an electron from the heme group of the cytochrome c1 subunit of cytochrome reductase. Cytochrome c then transfers this electron to the cytochrome oxidase complex, the final protein carrier in the mitochondrial electron-transport chain. In Cannabis sativa (Hemp), this protein is Cytochrome c.